The sequence spans 260 residues: Neurotrophin-3 (260 aa).

The signal sequence occupies residues 1 to 18 (MSILFYVMFLPYLCGIHA). A propeptide spanning residues 19-141 (TNMDKRNLPE…VNNRTSRRKR (123 aa)) is cleaved from the precursor. An N-linked (GlcNAc...) asparagine glycan is attached at Asn134. Disulfide bonds link Cys155-Cys220, Cys198-Cys249, and Cys208-Cys251.

This sequence belongs to the NGF-beta family.

The protein localises to the secreted. Functionally, seems to promote the survival of visceral and proprioceptive sensory neurons. This is Neurotrophin-3 (ntf3) from Xenopus laevis (African clawed frog).